The primary structure comprises 441 residues: Glutamate--tRNA ligase 1 (441 aa).

The 'HIGH' region motif lies at 7–17; sequence PSPTGYMHIGN. The 'KMSKS' region motif lies at 236–240; sequence KMSKR. An ATP-binding site is contributed by lysine 239.

The protein belongs to the class-I aminoacyl-tRNA synthetase family. Glutamate--tRNA ligase type 1 subfamily. Monomer.

It is found in the cytoplasm. The catalysed reaction is tRNA(Glu) + L-glutamate + ATP = L-glutamyl-tRNA(Glu) + AMP + diphosphate. Catalyzes the attachment of glutamate to tRNA(Glu) in a two-step reaction: glutamate is first activated by ATP to form Glu-AMP and then transferred to the acceptor end of tRNA(Glu). The sequence is that of Glutamate--tRNA ligase 1 from Anaplasma marginale (strain St. Maries).